An 817-amino-acid chain; its full sequence is Fibroblast growth factor receptor 2 (817 aa).

The first 22 residues, 1 to 22, serve as a signal peptide directing secretion; it reads MFARGWLLGALLLMTLATVSVA. Residues 23–377 are Extracellular-facing; that stretch reads RPSLKIDLVN…ETDYPPDYVE (355 aa). 3 Ig-like C2-type domains span residues 26 to 126, 159 to 247, and 256 to 358; these read LKID…VNVT, PEKM…YTLD, and PILQ…AWLT. N-linked (GlcNAc...) asparagine glycosylation is found at N32, N84, and N124. A disulfide bridge connects residues C63 and C108. Residues 161–178 are heparin-binding; that stretch reads KMEKKLHAVPAANTVKFR. A disulfide bridge links C179 with C231. N228, N265, N297, N318, and N331 each carry an N-linked (GlcNAc...) asparagine glycan. Cysteines 278 and 342 form a disulfide. Residues 378–398 form a helical membrane-spanning segment; that stretch reads IAIYCIGVFLIACMVVIVVVC. Topologically, residues 399–817 are cytoplasmic; the sequence is RMRTSAKKPD…YQHINGGIKT (419 aa). The interval 429 to 465 is disordered; it reads TVSSDSSSSMSSSTPLVRITTRRSSAHDDPIPEYDLP. The span at 431-441 shows a compositional bias: low complexity; that stretch reads SSDSSSSMSSS. At Y462 the chain carries Phosphotyrosine; by autocatalysis. Positions 477–766 constitute a Protein kinase domain; it reads LTLGKPLGEG…LTLATNEEYL (290 aa). Residues 483–491, K513, 561–563, and N567 each bind ATP; these read LGEGCFGQV and EYA. Y582 is modified (phosphotyrosine; by autocatalysis). D622 serves as the catalytic Proton acceptor. Phosphotyrosine; by autocatalysis is present on residues Y652, Y653, and Y765.

This sequence belongs to the protein kinase superfamily. Tyr protein kinase family. Fibroblast growth factor receptor subfamily. As to quaternary structure, monomer. Homodimer after ligand binding. Post-translationally, autophosphorylated. Binding of FGF family members together with heparan sulfate proteoglycan or heparin promotes receptor dimerization and autophosphorylation on tyrosine residues. Autophosphorylation occurs in trans between the two FGFR molecules present in the dimer. In terms of processing, N-glycosylated in the endoplasmic reticulum. The N-glycan chains undergo further maturation to an Endo H-resistant form in the Golgi apparatus. Ubiquitinated. FGFR2 is rapidly ubiquitinated after autophosphorylation, leading to internalization and degradation. Subject to degradation both in lysosomes and by the proteasome.

The protein resides in the cell membrane. It localises to the golgi apparatus. It is found in the cytoplasmic vesicle. It carries out the reaction L-tyrosyl-[protein] + ATP = O-phospho-L-tyrosyl-[protein] + ADP + H(+). Its activity is regulated as follows. Present in an inactive conformation in the absence of bound ligand. Ligand binding leads to dimerization and activation by autophosphorylation on tyrosine residues. Tyrosine-protein kinase that acts as a cell-surface receptor for fibroblast growth factors and plays an essential role in the regulation of cell proliferation, differentiation, migration and apoptosis, and in the regulation of embryonic development. Required for normal embryonic patterning, limb bud development, lung morphogenesis, osteogenesis and skin development. Plays an essential role in the regulation of osteoblast differentiation, proliferation and apoptosis, and is required for normal skeleton development. Promotes cell proliferation in keratinocytes and immature osteoblasts, but promotes apoptosis in differentiated osteoblasts. Phosphorylates PLCG1, FRS2 and PAK4. Ligand binding leads to the activation of several signaling cascades. Activation of PLCG1 leads to the production of the cellular signaling molecules diacylglycerol and inositol 1,4,5-trisphosphate. Phosphorylation of FRS2 triggers recruitment of GRB2, GAB1, PIK3R1 and SOS1, and mediates activation of RAS, MAPK1/ERK2, MAPK3/ERK1 and the MAP kinase signaling pathway, as well as of the AKT1 signaling pathway. FGFR2 signaling is down-regulated by ubiquitination, internalization and degradation. Mutations that lead to constitutive kinase activation or impair normal FGFR2 maturation, internalization and degradation lead to aberrant signaling. Over-expressed FGFR2 promotes activation of STAT1. The chain is Fibroblast growth factor receptor 2 (fgfr2) from Danio rerio (Zebrafish).